The sequence spans 529 residues: hal-like protein DDB_G0273787/DDB_G0273081 (529 aa).

A cross-link (5-imidazolinone (Ala-Gly)) is located at residues 151 to 153 (ASG). A 2,3-didehydroalanine (Ser) modification is found at Ser-152.

This sequence belongs to the PAL/histidase family. In terms of processing, contains an active site 4-methylidene-imidazol-5-one (MIO), which is formed autocatalytically by cyclization and dehydration of residues Ala-Ser-Gly.

The protein localises to the cytoplasm. The catalysed reaction is L-histidine = trans-urocanate + NH4(+). It participates in amino-acid degradation; L-histidine degradation into L-glutamate; N-formimidoyl-L-glutamate from L-histidine: step 1/3. This chain is hal-like protein DDB_G0273787/DDB_G0273081, found in Dictyostelium discoideum (Social amoeba).